The primary structure comprises 274 residues: S-adenosylmethionine-dependent nucleotide dehydratase (274 aa).

The Radical SAM core domain maps to 1 to 215; sequence MAYKVNLHIT…VERHAEVSHD (215 aa). [4Fe-4S] cluster-binding residues include C13, C17, and C20.

It belongs to the radical SAM superfamily. Prokaryotic viperin family. Requires [4Fe-4S] cluster as cofactor.

The enzyme catalyses CTP + AH2 + S-adenosyl-L-methionine = 3'-deoxy-3',4'-didehydro-CTP + 5'-deoxyadenosine + L-methionine + A + H2O + H(+). Functionally, expression of pVip6 in E.coli (strain MG1655) confers resistance to phages lambda, P1, SECphi6, SECphi8 and T7. Catalyzes the conversion of cytidine triphosphate (CTP) to 3'-deoxy-3',4'-didehydro-CTP (ddhCTP), probably via a SAM-dependent radical mechanism. The modified nucleotide represses transcription from T7 RNA polymerase-directed genes (possibly by acting as chain terminators), strongly suggesting these nucleotides block viral polymerase transcription. The chain is S-adenosylmethionine-dependent nucleotide dehydratase from Selenomonas ruminantium.